Here is a 185-residue protein sequence, read N- to C-terminus: ATP-dependent protease subunit HslV (185 aa).

T12 is an active-site residue. Residues S168, C171, and T174 each coordinate Na(+).

Belongs to the peptidase T1B family. HslV subfamily. As to quaternary structure, a double ring-shaped homohexamer of HslV is capped on each side by a ring-shaped HslU homohexamer. The assembly of the HslU/HslV complex is dependent on binding of ATP.

It is found in the cytoplasm. The enzyme catalyses ATP-dependent cleavage of peptide bonds with broad specificity.. Allosterically activated by HslU binding. In terms of biological role, protease subunit of a proteasome-like degradation complex believed to be a general protein degrading machinery. In Jannaschia sp. (strain CCS1), this protein is ATP-dependent protease subunit HslV.